The following is a 113-amino-acid chain: Protein translation factor SUI1 homolog (113 aa).

Belongs to the SUI1 family.

Functionally, probably involved in translation. In Spuriopimpinella brachycarpa (Chamnamul), this protein is Protein translation factor SUI1 homolog.